Consider the following 355-residue polypeptide: Ribosomal RNA large subunit methyltransferase M (355 aa).

S-adenosyl-L-methionine contacts are provided by residues serine 183, 216–219 (SPGG), aspartate 235, aspartate 255, and aspartate 271. Lysine 300 functions as the Proton acceptor in the catalytic mechanism.

It belongs to the class I-like SAM-binding methyltransferase superfamily. RNA methyltransferase RlmE family. RlmM subfamily. As to quaternary structure, monomer.

It is found in the cytoplasm. The enzyme catalyses cytidine(2498) in 23S rRNA + S-adenosyl-L-methionine = 2'-O-methylcytidine(2498) in 23S rRNA + S-adenosyl-L-homocysteine + H(+). Functionally, catalyzes the 2'-O-methylation at nucleotide C2498 in 23S rRNA. The chain is Ribosomal RNA large subunit methyltransferase M from Pseudomonas putida (strain W619).